Consider the following 253-residue polypeptide: 4-phosphopantoate--beta-alanine ligase (253 aa).

ATP is bound by residues R17, R39, 179–181, 185–186, and 197–198; these read DLN, RT, and NL.

It belongs to the archaeal phosphopantothenate synthetase family. As to quaternary structure, homodimer.

It carries out the reaction (R)-4-phosphopantoate + beta-alanine + ATP = (R)-4'-phosphopantothenate + AMP + diphosphate + H(+). It functions in the pathway cofactor biosynthesis; coenzyme A biosynthesis. Catalyzes the condensation of (R)-4-phosphopantoate and beta-alanine to 4'-phosphopantothenate in the CoA biosynthesis pathway. In Methanosarcina mazei (strain ATCC BAA-159 / DSM 3647 / Goe1 / Go1 / JCM 11833 / OCM 88) (Methanosarcina frisia), this protein is 4-phosphopantoate--beta-alanine ligase.